The primary structure comprises 359 residues: tRNA-specific 2-thiouridylase MnmA (359 aa).

Residues 6–13 (AMSGGVDS) and Leu-32 contribute to the ATP site. Residue Cys-101 is the Nucleophile of the active site. An intrachain disulfide couples Cys-101 to Cys-193. Gly-125 is a binding site for ATP. An interaction with tRNA region spans residues 143–145 (KDQ). Cys-193 serves as the catalytic Cysteine persulfide intermediate.

This sequence belongs to the MnmA/TRMU family.

It is found in the cytoplasm. It carries out the reaction S-sulfanyl-L-cysteinyl-[protein] + uridine(34) in tRNA + AH2 + ATP = 2-thiouridine(34) in tRNA + L-cysteinyl-[protein] + A + AMP + diphosphate + H(+). Its function is as follows. Catalyzes the 2-thiolation of uridine at the wobble position (U34) of tRNA, leading to the formation of s(2)U34. This chain is tRNA-specific 2-thiouridylase MnmA, found in Mycobacterium sp. (strain JLS).